The chain runs to 398 residues: Acetate kinase (398 aa).

Mg(2+) is bound at residue Asn10. Lys17 lines the ATP pocket. Substrate is bound at residue Arg91. Asp148 (proton donor/acceptor) is an active-site residue. Residues 208 to 212 (HLGNG), 283 to 285 (DCR), and 331 to 335 (GIGEN) contribute to the ATP site. Glu385 is a Mg(2+) binding site.

The protein belongs to the acetokinase family. As to quaternary structure, homodimer. Mg(2+) is required as a cofactor. The cofactor is Mn(2+).

Its subcellular location is the cytoplasm. The enzyme catalyses acetate + ATP = acetyl phosphate + ADP. The protein operates within metabolic intermediate biosynthesis; acetyl-CoA biosynthesis; acetyl-CoA from acetate: step 1/2. Its function is as follows. Catalyzes the formation of acetyl phosphate from acetate and ATP. Can also catalyze the reverse reaction. In Shewanella loihica (strain ATCC BAA-1088 / PV-4), this protein is Acetate kinase.